Reading from the N-terminus, the 444-residue chain is Phosphoglucosamine mutase (444 aa).

Catalysis depends on Ser-100, which acts as the Phosphoserine intermediate. Ser-100, Asp-234, Asp-236, and Asp-238 together coordinate Mg(2+). A Phosphoserine modification is found at Ser-100.

It belongs to the phosphohexose mutase family. Mg(2+) serves as cofactor. Activated by phosphorylation.

The enzyme catalyses alpha-D-glucosamine 1-phosphate = D-glucosamine 6-phosphate. Catalyzes the conversion of glucosamine-6-phosphate to glucosamine-1-phosphate. This chain is Phosphoglucosamine mutase, found in Rubrobacter xylanophilus (strain DSM 9941 / JCM 11954 / NBRC 16129 / PRD-1).